The primary structure comprises 211 residues: uncharacterized protein (211 aa).

Disordered regions lie at residues arginine 45–serine 74 and alanine 147–proline 211. Residues glycine 48 to glycine 71 show a composition bias toward low complexity. Polar residues predominate over residues aspartate 195–glutamate 205.

This is an uncharacterized protein from Homo sapiens (Human).